Reading from the N-terminus, the 449-residue chain is Glucose-6-phosphate isomerase (449 aa).

Glutamate 291 functions as the Proton donor in the catalytic mechanism. Catalysis depends on residues histidine 312 and lysine 426.

The protein belongs to the GPI family.

The protein localises to the cytoplasm. It catalyses the reaction alpha-D-glucose 6-phosphate = beta-D-fructose 6-phosphate. It participates in carbohydrate biosynthesis; gluconeogenesis. The protein operates within carbohydrate degradation; glycolysis; D-glyceraldehyde 3-phosphate and glycerone phosphate from D-glucose: step 2/4. Its function is as follows. Catalyzes the reversible isomerization of glucose-6-phosphate to fructose-6-phosphate. This chain is Glucose-6-phosphate isomerase, found in Clostridium botulinum (strain Eklund 17B / Type B).